The chain runs to 449 residues: Baeyer-Villiger oxidase GME11358 (449 aa).

The protein belongs to the questin oxidase family.

It functions in the pathway secondary metabolite biosynthesis. Baeyer-Villiger oxidase; part of the gene cluster that mediates the biosynthesis of dibenzodioxocinones such as pestalotiollide B, a novel class of inhibitors against cholesterol ester transfer protein (CEPT). The biosynthesis initiates from condensation of acetate and malonate units catalyzed by the non-reducing PKS pks8/GME11356. Pks8/GME11356 lacks a thioesterase (TE) domain, which is important to the cyclizing of the third ring of atrochrysone carboxylic acid, and the esterase GME11355 might play the role of TE and catalyzes the cyclization reaction of the C ring. The lactamase-like protein GME11357 (or other beta-lactamases in Pestalotiopsis microspora) probably hydrolyzes the thioester bond between the ACP of pks8/GME11356 and the intermediate to release atrochrysone carboxylic acid, which is spontaneously dehydrates to form endocrocin anthrone. Endocrocin anthrone is further converted to emodin via the endocrocin intermediate. Emodin is then oxidized by several enzymes such as the Baeyer-Villiger oxidase GME11358, the oxidoreductase GME11367, the short chain dehydrogenase/reductase GME11373, as well as by other oxidoreductases from the cluster, to modify the A and C rings and open the B ring, and finally yield monodictyphenone. The prenyltransferase GME11375 may catalyze the addition reaction between the C5 side chains and the carbon bone of dibenzodioxocinones. The remaining biochemical reactions to the final product dibenzodioxocinones should be methylation catalyzed by methyltransferase GME11366 and reduction and lactonization reaction catalyzed by a series of oxidordeuctases. The chain is Baeyer-Villiger oxidase GME11358 from Pestalotiopsis microspora.